The primary structure comprises 706 residues: Elongation factor G (706 aa).

Positions 8–295 (ELYRNFGIMA…AVIDYLPSPL (288 aa)) constitute a tr-type G domain. GTP contacts are provided by residues 17–24 (AHIDAGKT), 92–96 (DTPGH), and 146–149 (NKMD).

It belongs to the TRAFAC class translation factor GTPase superfamily. Classic translation factor GTPase family. EF-G/EF-2 subfamily.

It localises to the cytoplasm. Functionally, catalyzes the GTP-dependent ribosomal translocation step during translation elongation. During this step, the ribosome changes from the pre-translocational (PRE) to the post-translocational (POST) state as the newly formed A-site-bound peptidyl-tRNA and P-site-bound deacylated tRNA move to the P and E sites, respectively. Catalyzes the coordinated movement of the two tRNA molecules, the mRNA and conformational changes in the ribosome. The sequence is that of Elongation factor G from Ruegeria sp. (strain TM1040) (Silicibacter sp.).